A 472-amino-acid chain; its full sequence is Kynureninase 1 (472 aa).

Pyridoxal 5'-phosphate is bound by residues Leu146, Thr147, 174–177 (FPSD), Ser231, Asp260, His263, and Tyr285. Lys286 is modified (N6-(pyridoxal phosphate)lysine). Residues Trp326 and Asn354 each contribute to the pyridoxal 5'-phosphate site.

Belongs to the kynureninase family. In terms of assembly, homodimer. Pyridoxal 5'-phosphate serves as cofactor.

The protein localises to the cytoplasm. It catalyses the reaction L-kynurenine + H2O = anthranilate + L-alanine + H(+). It carries out the reaction 3-hydroxy-L-kynurenine + H2O = 3-hydroxyanthranilate + L-alanine + H(+). It functions in the pathway amino-acid degradation; L-kynurenine degradation; L-alanine and anthranilate from L-kynurenine: step 1/1. The protein operates within cofactor biosynthesis; NAD(+) biosynthesis; quinolinate from L-kynurenine: step 2/3. Functionally, catalyzes the cleavage of L-kynurenine (L-Kyn) and L-3-hydroxykynurenine (L-3OHKyn) into anthranilic acid (AA) and 3-hydroxyanthranilic acid (3-OHAA), respectively. This is Kynureninase 1 (bna5-1) from Aspergillus niger (strain ATCC MYA-4892 / CBS 513.88 / FGSC A1513).